The following is a 618-amino-acid chain: DNA mismatch repair protein MutL (618 aa).

A compositionally biased stretch (low complexity) spans 367-381 (EPTAAREPATPRYSG). The segment at 367-402 (EPTAAREPATPRYSGGASGGNGGRQSAGGWPHAQPG) is disordered. Residues 382 to 392 (GASGGNGGRQS) show a composition bias toward gly residues.

The protein belongs to the DNA mismatch repair MutL/HexB family.

In terms of biological role, this protein is involved in the repair of mismatches in DNA. It is required for dam-dependent methyl-directed DNA mismatch repair. May act as a 'molecular matchmaker', a protein that promotes the formation of a stable complex between two or more DNA-binding proteins in an ATP-dependent manner without itself being part of a final effector complex. The protein is DNA mismatch repair protein MutL of Salmonella dublin (strain CT_02021853).